The sequence spans 269 residues: Interleukin-1 beta (269 aa).

A propeptide spans 1–116 (removed in mature form; by CASP1); that stretch reads MAEVPELASE…TWDNEAYVHD (116 aa). An Involved in interaction with TMED10 C-terminus motif is present at residues 228 to 241; it reads FESAQFPNWYISTS.

Belongs to the IL-1 family. Monomer. In its precursor form, weakly interacts with full-length MEFV; the mature cytokine does not interact at all. Interacts with integrins ITGAV:ITGBV and ITGA5:ITGB1; integrin-binding is required for IL1B signaling. Interacts with cargo receptor TMED10; the interaction is direct and is required for the secretion of IL1B mature form. Interacts with HSP90AB1; the interaction facilitates cargo translocation into the ERGIC. Interacts with HSP90B1; the interaction facilitates cargo translocation into the ERGIC. Activation of the IL1B precursor involves a CASP1-catalyzed proteolytic cleavage. Processing and secretion are temporarily associated. Post-translationally, (Microbial infection) Cleavage by S.pyogenes cysteine protease SpeB promotes its activation independently of CASP1. As to expression, expressed in activated monocytes/macrophages (at protein level).

It is found in the cytoplasm. The protein resides in the cytosol. The protein localises to the secreted. Its subcellular location is the lysosome. It localises to the extracellular exosome. (Microbial infection) Cleavage by S.pyogenes cysteine protease SpeB promotes its activation independently of CASP1. SpeB-mediated maturation of IL1B plays a dual role depending on infection site: while IL1B inflammatory response prevents bacterial growth during invasive skin infections, it promotes streptococcal infection of the nasopharynx by disrupting colonization resistance mediated by the microbiota. Functionally, potent pro-inflammatory cytokine. Initially discovered as the major endogenous pyrogen, induces prostaglandin synthesis, neutrophil influx and activation, T-cell activation and cytokine production, B-cell activation and antibody production, and fibroblast proliferation and collagen production. Promotes Th17 differentiation of T-cells. Synergizes with IL12/interleukin-12 to induce IFNG synthesis from T-helper 1 (Th1) cells. Plays a role in angiogenesis by inducing VEGF production synergistically with TNF and IL6. Involved in transduction of inflammation downstream of pyroptosis: its mature form is specifically released in the extracellular milieu by passing through the gasdermin-D (GSDMD) pore. Acts as a sensor of S.pyogenes infection in skin: cleaved and activated by pyogenes SpeB protease, leading to an inflammatory response that prevents bacterial growth during invasive skin infection. This chain is Interleukin-1 beta, found in Homo sapiens (Human).